We begin with the raw amino-acid sequence, 471 residues long: MGIIRFQILNPTRICRSTIYYMSCRYLPSSSSSSSPLRVSSSSSQKPSFDFSRRWHFGHPDHHQQYQKPGEEGEKIFRLGLTADIGLSVAKALTGYLCGSTAIIADAAHSVSDVVLSGVALVSYRAANVPKDKEHPYGHGKFETLGALGISAMLLATGSGIAWHALDLLSIALSAAPEVIHSGHHHGIDMNHPILALTVTIASISIKEGLYWITKRAGEKQGSGLMMANAWHHRSDAISSLVALVGVGGSILGVNFLDPLAGLVVSTMIVNAGLKTGHQSILELVDAAIPAQQLEPIRQTILQVEGVKGCHRLRGRRAGSSLYLDVHIVVDPFSSVSVAHEVGEYVRRQINLNHPEVSEVFIHIDPAFLQFSCSTKDHDSITKESNICQEIKHVEATVSDIFSSQLSEKLTIKRITPHLLHSKILLQIVVAMPSTMSIQDVMIAAEHAEKEILKAAPNVARVSIQLSLNSE.

Residues 1-78 (MGIIRFQILN…PGEEGEKIFR (78 aa)) lie on the Cytoplasmic side of the membrane. Residues 79–99 (LGLTADIGLSVAKALTGYLCG) form a helical membrane-spanning segment. The Vacuolar portion of the chain corresponds to 100–101 (ST). A helical membrane pass occupies residues 102–122 (AIIADAAHSVSDVVLSGVALV). The Cytoplasmic portion of the chain corresponds to 123–144 (SYRAANVPKDKEHPYGHGKFET). A helical membrane pass occupies residues 145-165 (LGALGISAMLLATGSGIAWHA). Residues 166–192 (LDLLSIALSAAPEVIHSGHHHGIDMNH) lie on the Vacuolar side of the membrane. The helical transmembrane segment at 193 to 213 (PILALTVTIASISIKEGLYWI) threads the bilayer. The Cytoplasmic portion of the chain corresponds to 214–236 (TKRAGEKQGSGLMMANAWHHRSD). The chain crosses the membrane as a helical span at residues 237–257 (AISSLVALVGVGGSILGVNFL). The Vacuolar segment spans residues 258-423 (DPLAGLVVST…RITPHLLHSK (166 aa)). A helical membrane pass occupies residues 424–444 (ILLQIVVAMPSTMSIQDVMIA). At 445–471 (AEHAEKEILKAAPNVARVSIQLSLNSE) the chain is on the cytoplasmic side.

The protein belongs to the cation diffusion facilitator (CDF) transporter (TC 2.A.4) family.

The protein resides in the vacuole membrane. Its function is as follows. Involved in sequestration of excess metal in the cytoplasm into vacuoles to maintain metal homeostasis. The polypeptide is Metal tolerance protein C1 (MTPC1) (Arabidopsis thaliana (Mouse-ear cress)).